The chain runs to 316 residues: dTDP-4-dehydro-6-deoxyglucose reductase (316 aa).

16 to 17 (FI) contacts NAD(+). Tyr-151 functions as the Proton acceptor in the catalytic mechanism. Residue Lys-155 coordinates NAD(+).

Belongs to the NAD(P)-dependent epimerase/dehydratase family.

It catalyses the reaction dTDP-alpha-D-fucose + NAD(+) = dTDP-4-dehydro-6-deoxy-alpha-D-glucose + NADH + H(+). The catalysed reaction is dTDP-alpha-D-fucose + NADP(+) = dTDP-4-dehydro-6-deoxy-alpha-D-glucose + NADPH + H(+). It participates in bacterial outer membrane biogenesis; LPS O-antigen biosynthesis. Its activity is regulated as follows. Inhibited by Cu(2+), while other divalent cations such as Ca(2+), Co(2+), Fe(2+), Mn(2+) and Mg(2+) have no obvious effects on enzyme activity. Functionally, catalyzes the stereospecific reduction of the C-4 keto group of dTDP-4-dehydro-6-deoxy-D-glucose, leading to dTDP-D-fucopyranose. This is a step in the biosynthesis of D-fucofuranose, a component of E.coli O52 O antigen. Is more efficient using NADH than NADPH as cosubstrate. The sequence is that of dTDP-4-dehydro-6-deoxyglucose reductase (fcf1) from Escherichia coli.